The sequence spans 200 residues: Large ribosomal subunit protein bL25 (200 aa).

The protein belongs to the bacterial ribosomal protein bL25 family. CTC subfamily. As to quaternary structure, part of the 50S ribosomal subunit; part of the 5S rRNA/L5/L18/L25 subcomplex. Contacts the 5S rRNA. Binds to the 5S rRNA independently of L5 and L18.

This is one of the proteins that binds to the 5S RNA in the ribosome where it forms part of the central protuberance. The polypeptide is Large ribosomal subunit protein bL25 (Corynebacterium glutamicum (strain ATCC 13032 / DSM 20300 / JCM 1318 / BCRC 11384 / CCUG 27702 / LMG 3730 / NBRC 12168 / NCIMB 10025 / NRRL B-2784 / 534)).